The chain runs to 53 residues: uncharacterized protein (53 aa).

This is an uncharacterized protein from Homo sapiens (Human).